A 323-amino-acid polypeptide reads, in one-letter code: Probable proline iminopeptidase (323 aa).

Residues 37-301 enclose the AB hydrolase-1 domain; the sequence is VVLHGGPGSR…VIVDEAGHDA (265 aa). The active-site Nucleophile is the S114. D271 is a catalytic residue. H299 functions as the Proton donor in the catalytic mechanism.

It belongs to the peptidase S33 family.

Its subcellular location is the cytoplasm. The enzyme catalyses Release of N-terminal proline from a peptide.. In terms of biological role, specifically catalyzes the removal of N-terminal proline residues from peptides. In Streptomyces coelicolor (strain ATCC BAA-471 / A3(2) / M145), this protein is Probable proline iminopeptidase.